Reading from the N-terminus, the 200-residue chain is Protein GrpE (200 aa).

It belongs to the GrpE family. In terms of assembly, homodimer.

It is found in the cytoplasm. Participates actively in the response to hyperosmotic and heat shock by preventing the aggregation of stress-denatured proteins, in association with DnaK and GrpE. It is the nucleotide exchange factor for DnaK and may function as a thermosensor. Unfolded proteins bind initially to DnaJ; upon interaction with the DnaJ-bound protein, DnaK hydrolyzes its bound ATP, resulting in the formation of a stable complex. GrpE releases ADP from DnaK; ATP binding to DnaK triggers the release of the substrate protein, thus completing the reaction cycle. Several rounds of ATP-dependent interactions between DnaJ, DnaK and GrpE are required for fully efficient folding. This Shewanella piezotolerans (strain WP3 / JCM 13877) protein is Protein GrpE.